A 211-amino-acid polypeptide reads, in one-letter code: Probable oligoribonuclease (211 aa).

The Exonuclease domain maps to 38 to 202 (IVWMDLEMTG…DDIRESIKEL (165 aa)). The active site involves Tyr-159.

It belongs to the oligoribonuclease family.

Its function is as follows. 3'-to-5' exoribonuclease specific for small oligoribonucleotides. The polypeptide is Probable oligoribonuclease (Drosophila melanogaster (Fruit fly)).